Reading from the N-terminus, the 780-residue chain is Ral guanine nucleotide dissociation stimulator-like 2 (780 aa).

Residues 1 to 92 (MLPRPLRLLW…PTPPPRSSRR (92 aa)) are disordered. Serine 13 is subject to Phosphoserine. Residues 31 to 42 (GGGPGGRGVGGG) are compositionally biased toward gly residues. Residues 43–65 (QEEEEEEEEDEAPVSVWDEEEDG) are compositionally biased toward acidic residues. The region spanning 89–213 (SSRRLRAGTL…GSADLIRNLR (125 aa)) is the N-terminal Ras-GEF domain. Residues 244 to 516 (LADHLAEQLT…HRVSCEVEPP (273 aa)) form the Ras-GEF domain. The span at 596 to 613 (HSLADPSHLSPPASSPRP) shows a compositional bias: low complexity. Disordered stretches follow at residues 596-651 (HSLA…GASD) and 741-769 (TATLGLTSSPSASGTPPSEGGGGSFPRIK). Positions 651–738 (DCRIIRVQME…HDFLLRQRRR (88 aa)) constitute a Ras-associating domain. Residues 741-758 (TATLGLTSSPSASGTPPS) show a composition bias toward low complexity.

Interacts with SAMD9.

Functionally, probable guanine nucleotide exchange factor. Putative effector of Ras and/or Rap. Associates with the GTP-bound form of Rap 1A and H-Ras in vitro. The protein is Ral guanine nucleotide dissociation stimulator-like 2 (RGL2) of Canis lupus familiaris (Dog).